Consider the following 470-residue polypeptide: Acetyl-CoA decarbonylase/synthase complex subunit beta 2 (470 aa).

[Ni-Fe-S] cluster is bound by residues C189, C192, C278, and C280.

The protein belongs to the CdhC family. As to quaternary structure, monomer. The ACDS complex is made up of alpha, epsilon, beta, gamma and delta chains with a probable stoichiometry of (alpha(2)epsilon(2))(4)-beta(8)-(gamma(1)delta(1))(8) (Potential). [Ni-Fe-S] cluster serves as cofactor.

It catalyses the reaction Co(I)-[corrinoid Fe-S protein] + acetyl-CoA + H(+) = methyl-Co(III)-[corrinoid Fe-S protein] + CO + CoA. The protein operates within one-carbon metabolism; methanogenesis from acetate. Functionally, part of a complex that catalyzes the reversible cleavage of acetyl-CoA, allowing growth on acetate as sole source of carbon and energy. The alpha-epsilon complex generates CO from CO(2), while the beta subunit (this protein) combines the CO with CoA and a methyl group to form acetyl-CoA. The methyl group, which is incorporated into acetyl-CoA, is transferred to the beta subunit by a corrinoid iron-sulfur protein (the gamma-delta complex). The protein is Acetyl-CoA decarbonylase/synthase complex subunit beta 2 (cdhC2) of Methanosarcina acetivorans (strain ATCC 35395 / DSM 2834 / JCM 12185 / C2A).